The primary structure comprises 585 residues: Chaperonin GroEL, chloroplastic (585 aa).

ATP-binding positions include 55 to 58, 113 to 117, G442, 507 to 509, and D523; these read TLGP, DGTTT, and NAA.

Belongs to the chaperonin (HSP60) family. Forms a cylinder of 14 subunits composed of two heptameric rings stacked back-to-back. Interacts with the co-chaperonin GroES.

Its subcellular location is the plastid. The protein resides in the chloroplast. It carries out the reaction ATP + H2O + a folded polypeptide = ADP + phosphate + an unfolded polypeptide.. Together with its co-chaperonin GroES, plays an essential role in assisting protein folding. The GroEL-GroES system forms a nano-cage that allows encapsulation of the non-native substrate proteins and provides a physical environment optimized to promote and accelerate protein folding. In Pyrenomonas salina, this protein is Chaperonin GroEL, chloroplastic.